A 481-amino-acid polypeptide reads, in one-letter code: Thyroid receptor-interacting protein 6 (481 aa).

Pro residues predominate over residues 1–12 (MSGPTWLPPKQP). The interval 1–259 (MSGPTWLPPK…QVPLSQPPEE (259 aa)) is disordered. At arginine 25 the chain carries Asymmetric dimethylarginine; alternate. Arginine 25 bears the Omega-N-methylarginine; alternate mark. Tyrosine 55 carries the post-translational modification Phosphotyrosine; by SRC. Serine 92 carries the phosphoserine modification. The segment covering 108 to 122 (DGGRGHAPRRPDRQA) has biased composition (basic and acidic residues). Omega-N-methylarginine is present on arginine 111. 2 stretches are compositionally biased toward low complexity: residues 153 to 173 (SPYG…AGPA) and 183 to 193 (PVRGCGPPRRG). Omega-N-methylarginine is present on residues arginine 185 and arginine 192. Serine 195 bears the Phosphoserine mark. At arginine 211 the chain carries Omega-N-methylarginine. The span at 221 to 233 (SHREPGPGVKEEA) shows a compositional bias: basic and acidic residues. Arginine 243 carries the post-translational modification Omega-N-methylarginine. Serine 254 carries the phosphoserine modification. LIM zinc-binding domains are found at residues 284 to 321 (CGGC…QLRG), 344 to 403 (CSTC…FAPR), and 404 to 472 (CSVC…RIQE). Residues 474–481 (SATVTTDC) are interaction with MAGI1 and PTPN13.

The protein belongs to the zyxin/ajuba family. As to quaternary structure, specifically interacts with the ligand binding domain of the thyroid receptor (TR) in the presence of thyroid hormone. Interacts (via the third LIM domain and C-terminus) with PTPN13 (via the second PDZ domain). Interacts (via the second LIM domain or via the third LIM domain plus C-terminus) with PDLIM4 (via PDZ domain). Found in a complex with PTPN13 and PDLIM4. Interacts with SVIL isoform 2. Interacts with LPAR2 but not other LPA receptors. Interacts with PRKAA2. Interacts with MAGI1. Interacts with SCRIB. In terms of processing, phosphorylation at Tyr-55 by SRC is required for enhancement of lysophosphatidic acid-induced cell migration. Tyr-55 is dephosphorylated by PTPN13.

The protein resides in the cytoplasm. Its subcellular location is the cytoskeleton. It localises to the cell junction. The protein localises to the focal adhesion. It is found in the nucleus. Functionally, relays signals from the cell surface to the nucleus to weaken adherens junction and promote actin cytoskeleton reorganization and cell invasiveness. Involved in lysophosphatidic acid-induced cell adhesion and migration. Acts as a transcriptional coactivator for NF-kappa-B and JUN, and mediates the transrepression of these transcription factors induced by glucocorticoid receptor. The protein is Thyroid receptor-interacting protein 6 (TRIP6) of Bos taurus (Bovine).